We begin with the raw amino-acid sequence, 845 residues long: G-type lectin S-receptor-like serine/threonine-protein kinase At1g11410 (845 aa).

Positions 1-21 are cleaved as a signal peptide; it reads MKFFFIFFIFLFSFLIQSCYS. A Bulb-type lectin domain is found at 22 to 147; that stretch reads DNTILRSQSL…VTGKSFWESF (126 aa). Residues 22–441 lie on the Extracellular side of the membrane; it reads DNTILRSQSL…NGNGASGKKR (420 aa). 5 N-linked (GlcNAc...) asparagine glycosylation sites follow: Asn-82, Asn-103, Asn-185, Asn-231, and Asn-259. Residues 283–321 form the EGF-like domain; sequence PEDKCDIYNHCGFNGYCDSTSTEKFECSCLPGYEPKTPR. Cystine bridges form between Cys-287–Cys-299 and Cys-293–Cys-309. Residues 341–424 form the PAN domain; sequence CNGKEGFAKL…SGQDFYLRVD (84 aa). Asn-357, Asn-366, and Asn-379 each carry an N-linked (GlcNAc...) asparagine glycan. Disulfide bonds link Cys-372/Cys-399 and Cys-376/Cys-382. A helical transmembrane segment spans residues 442–462; it reads LVLILISLIAVVMLLLISFHC. Residues 463-845 are Cytoplasmic-facing; it reads YLRKRRQRTQ…DVTLTDVQGR (383 aa). The 286-residue stretch at 523 to 808 folds into the Protein kinase domain; sequence FAFQNKLGAG…DLPSPKHPAF (286 aa). ATP-binding positions include 529–537 and Lys-551; that span reads LGAGGFGPV. Positions 612-629 are caM-binding; sequence EQRAELDWPKRMGIIRGI. Residue Asp-648 is the Proton acceptor of the active site. Positions 803–845 are disordered; that stretch reads PKHPAFTAGRRRNTKTGGSSDNWPSGETSSTINDVTLTDVQGR. Over residues 817–845 the composition is skewed to polar residues; that stretch reads KTGGSSDNWPSGETSSTINDVTLTDVQGR.

The protein belongs to the protein kinase superfamily. Ser/Thr protein kinase family.

It localises to the cell membrane. The enzyme catalyses L-seryl-[protein] + ATP = O-phospho-L-seryl-[protein] + ADP + H(+). The catalysed reaction is L-threonyl-[protein] + ATP = O-phospho-L-threonyl-[protein] + ADP + H(+). The protein is G-type lectin S-receptor-like serine/threonine-protein kinase At1g11410 of Arabidopsis thaliana (Mouse-ear cress).